The chain runs to 384 residues: MIKKIPAILVLEDGTYYKGWSFQADQSIVTIGEVVFNTGMTGYQEIITDPSYFQQIVTFTYPEIGNTGINSEDIESQTISIKGLVAKNICKISSSWRQQESLVQYLNRYKIPFIFGIDTRSLTQYLRRSGTMNGCISNKNLNHAYLQRKISEVPHMTGLDLIPNVTTNIMYDWDEKSLPSWYLADRNREKIYSQLKVIVIDFGVKLNILRRLATLGCQITVMPASTPTQDILSCKPDGILLSNGPGDPSAVNYGIKTVKELLNQNIPIFGICMGHQILNLALEAKTFKLKFGHRGINHPSGLKQQVEITSQNHGFAVDLQSVLKLSLQVTHFNLNDITVAGTGHSRSPYFSVQYHPESSPGPHDADYLFEYFIEIMKQFRKEAN.

A CPSase region spans residues 1–192; it reads MIKKIPAILV…LADRNREKIY (192 aa). 3 residues coordinate L-glutamine: serine 51, glycine 244, and glycine 246. Residues 196-382 form the Glutamine amidotransferase type-1 domain; sequence KVIVIDFGVK…IEIMKQFRKE (187 aa). Cysteine 272 serves as the catalytic Nucleophile. Methionine 273, glutamine 276, asparagine 312, glycine 314, and phenylalanine 315 together coordinate L-glutamine. Residues histidine 355 and glutamate 357 contribute to the active site.

This sequence belongs to the CarA family. Composed of two chains; the small (or glutamine) chain promotes the hydrolysis of glutamine to ammonia, which is used by the large (or ammonia) chain to synthesize carbamoyl phosphate. Tetramer of heterodimers (alpha,beta)4.

The protein resides in the plastid. It is found in the chloroplast. It catalyses the reaction hydrogencarbonate + L-glutamine + 2 ATP + H2O = carbamoyl phosphate + L-glutamate + 2 ADP + phosphate + 2 H(+). The catalysed reaction is L-glutamine + H2O = L-glutamate + NH4(+). It participates in amino-acid biosynthesis; L-arginine biosynthesis; carbamoyl phosphate from bicarbonate: step 1/1. It functions in the pathway pyrimidine metabolism; UMP biosynthesis via de novo pathway; (S)-dihydroorotate from bicarbonate: step 1/3. In terms of biological role, small subunit of the glutamine-dependent carbamoyl phosphate synthetase (CPSase). CPSase catalyzes the formation of carbamoyl phosphate from the ammonia moiety of glutamine, carbonate, and phosphate donated by ATP, constituting the first step of 2 biosynthetic pathways, one leading to arginine and/or urea and the other to pyrimidine nucleotides. The small subunit (glutamine amidotransferase) binds and cleaves glutamine to supply the large subunit with the substrate ammonia. The sequence is that of Carbamoyl phosphate synthase small chain from Porphyra purpurea (Red seaweed).